The chain runs to 1058 residues: Bromodomain-containing protein 1 (1058 aa).

Basic residues predominate over residues 1 to 12; sequence MRRKGRCHRGSA. The disordered stretch occupies residues 1 to 25; the sequence is MRRKGRCHRGSAARHPSSPCSIKHS. The interval 31-80 is interaction with KAT7/HBO1 and histones; sequence LTYAQAQRMVEIEIEGRLHRISIFDPLEIILEDDLTAQEMSECNSNKENS. Serine 128 carries the phosphoserine modification. A PHD-type 1 zinc finger spans residues 214–264; the sequence is DAVCCICMDGECQNSNVILFCDMCNLAVHQECYGVPYIPEGQWLCRHCLQS. A C2HC pre-PHD-type zinc finger spans residues 268–301; the sequence is PADCVLCPNKGGAFKKTDDDRWGHVVCALWIPEV. A PHD-type 2 zinc finger spans residues 325 to 389; sequence LTCYLCKQKG…RKTAYCDVHT (65 aa). Residues lysine 368, lysine 516, and lysine 519 each carry the N6-acetyllysine modification. Residues lysine 554 and lysine 594 each participate in a glycyl lysine isopeptide (Lys-Gly) (interchain with G-Cter in SUMO2) cross-link. A Bromo domain is found at 562-666; that stretch reads LRLTPLTVLL…DQGGVVLRQA (105 aa). Over residues 754-763 the composition is skewed to polar residues; it reads KLSQQHSQAP. Disordered stretches follow at residues 754 to 776 and 791 to 847; these read KLSQ…EDEA and LETL…AAPR. Serine 803 carries the phosphoserine modification. Lysine 903 carries the N6-acetyllysine modification. In terms of domain architecture, PWWP spans 929–1012; that stretch reads PLKVVWAKCS…KSKMVPLGVD (84 aa). Phosphoserine occurs at positions 1052 and 1055.

In terms of assembly, component of some HBO1 complexes composed of KAT7/HBO1, MEAF6, ING4 and BRD1/BRPF2. Component of the MOZ/MORF complex composed at least of ING5, KAT6A, KAT6B, MEAF6 and one of BRPF1, BRD1/BRPF2 and BRPF3. Interacts (via PHD-type zinc finger domain) with unmodified histone H3. Interacts (via PWWP domain) with dimethylated and trimethylated 'Lys-79' on histone H3.

It localises to the nucleus. Its subcellular location is the chromosome. In terms of biological role, scaffold subunit of various histone acetyltransferase (HAT) complexes, such as the MOZ/MORF and HBO1 complexes, that acts as a regulator of hematopoiesis. Plays a key role in HBO1 complex by directing KAT7/HBO1 specificity towards histone H3 'Lys-14' acetylation (H3K14ac), thereby promoting erythroid differentiation. The chain is Bromodomain-containing protein 1 from Mus musculus (Mouse).